Consider the following 797-residue polypeptide: Calcium-transporting ATPase CtpE (797 aa).

3 helical membrane-spanning segments follow: residues 55 to 75, 215 to 235, and 254 to 274; these read LLLIVLATGSLINGMFGLLII, ILQFITYLLVPAGLLTIYTQL, and VPMVPEGLVLMTSIAFAVGVV. The active-site 4-aspartylphosphate intermediate is the Asp-301. Asp-301, Thr-303, and Asp-536 together coordinate Mg(2+). The next 6 helical transmembrane spans lie at 601–621, 633–653, 667–687, 703–723, 729–749, and 764–784; these read TVYSVLLALLVGIECLIAIPL, IHVTIAAWFTIGIPAFILSLA, VMTSAVPFGLVIGVATFVTYL, ASTAALITLLMTALWVLAVIA, WRLALVLPSGLAYVVIFSLPL, and TSIALAVGVVGAATIEAMWWI.

It belongs to the cation transport ATPase (P-type) (TC 3.A.3) family.

It is found in the cell membrane. The catalysed reaction is Ca(2+)(in) + ATP + H2O = Ca(2+)(out) + ADP + phosphate + H(+). P-type ATPase involved in specific uptake of calcium. This Mycobacterium tuberculosis (strain CDC 1551 / Oshkosh) protein is Calcium-transporting ATPase CtpE (ctpE).